A 229-amino-acid chain; its full sequence is Transmembrane protein 217 (229 aa).

Residues 13–33 traverse the membrane as a helical segment; the sequence is MGTVLSGVFTIMAVDMYLIFE. Asn-39 carries an N-linked (GlcNAc...) asparagine glycan. Helical transmembrane passes span 67-87, 94-114, and 129-149; these read IVLF…YSVY, LVIY…IQIL, and WFGL…VINY. A glycan (N-linked (GlcNAc...) asparagine) is linked at Asn-156.

It localises to the membrane. The sequence is that of Transmembrane protein 217 (TMEM217) from Homo sapiens (Human).